The chain runs to 165 residues: Thiol peroxidase (165 aa).

One can recognise a Thioredoxin domain in the interval 18–164 (RKVGDKAPNF…YEAAIEAAKK (147 aa)). Cysteine 60 functions as the Cysteine sulfenic acid (-SOH) intermediate in the catalytic mechanism. The cysteines at positions 60 and 94 are disulfide-linked.

This sequence belongs to the peroxiredoxin family. Tpx subfamily. As to quaternary structure, homodimer.

It carries out the reaction a hydroperoxide + [thioredoxin]-dithiol = an alcohol + [thioredoxin]-disulfide + H2O. In terms of biological role, thiol-specific peroxidase that catalyzes the reduction of hydrogen peroxide and organic hydroperoxides to water and alcohols, respectively. Plays a role in cell protection against oxidative stress by detoxifying peroxides. This is Thiol peroxidase from Listeria innocua serovar 6a (strain ATCC BAA-680 / CLIP 11262).